The chain runs to 211 residues: Thymidylate kinase (211 aa).

11 to 18 contacts ATP; that stretch reads GPDGAGKT.

It belongs to the thymidylate kinase family.

The enzyme catalyses dTMP + ATP = dTDP + ADP. Functionally, phosphorylation of dTMP to form dTDP in both de novo and salvage pathways of dTTP synthesis. The polypeptide is Thymidylate kinase (Streptococcus pyogenes serotype M3 (strain ATCC BAA-595 / MGAS315)).